The chain runs to 1173 residues: Pre-mRNA-processing ATP-dependent RNA helicase prp5 (1173 aa).

2 disordered regions span residues 1 to 232 and 268 to 418; these read MARH…QGVD and PSSA…DAQE. Residues 8 to 20 are compositionally biased toward low complexity; it reads RSPSPVGSTYSSS. Composition is skewed to basic and acidic residues over residues 24 to 100, 107 to 154, and 166 to 198; these read RRDD…DRDY, RDRD…KSRE, and PTDD…KEAE. 2 stretches are compositionally biased toward polar residues: residues 219 to 228 and 270 to 290; these read AVSSPQSPAT and SAKT…SGNA. The segment covering 356–374 has biased composition (acidic residues); the sequence is NADDDDDVDMQDGETEEDA. The span at 381 to 390 shows a compositional bias: basic and acidic residues; the sequence is AAERREERLQ. A compositionally biased stretch (low complexity) spans 395–404; the sequence is TKTTNGNTTA. Residues 405 to 414 show a composition bias toward basic and acidic residues; it reads KAEEADKMEV. Positions 541–569 match the Q motif motif; sequence QKWSQCGLGIQTLDVIDKLGFASLTSIQA. The Helicase ATP-binding domain maps to 572–750; sequence IPAIMSGRDV…RKTLTKPIEI (179 aa). Position 585 to 592 (585 to 592) interacts with ATP; sequence AKTGSGKT. The short motif at 698 to 701 is the DEAD box element; sequence DEAD. The Helicase C-terminal domain occupies 761-927; the sequence is EITQIVEVCN…EVPEAVQKLV (167 aa). A disordered region spans residues 938–989; that stretch reads KEKASNSGFGGKGLERLDQERDAARMRERRTYKTGEEGEDEEEKDEKKNEQA. The segment covering 950 to 973 has biased composition (basic and acidic residues); sequence GLERLDQERDAARMRERRTYKTGE.

The protein belongs to the DEAD box helicase family. DDX46/PRP5 subfamily.

It localises to the nucleus. The enzyme catalyses ATP + H2O = ADP + phosphate + H(+). In terms of biological role, ATP-dependent RNA helicase involved spliceosome assembly and in nuclear splicing. Catalyzes an ATP-dependent conformational change of U2 snRNP. Bridges U1 and U2 snRNPs and enables stable U2 snRNP association with intron RNA. The polypeptide is Pre-mRNA-processing ATP-dependent RNA helicase prp5 (prp5) (Emericella nidulans (strain FGSC A4 / ATCC 38163 / CBS 112.46 / NRRL 194 / M139) (Aspergillus nidulans)).